The following is a 173-amino-acid chain: MKRPEKEAVVAQLTDKFRNADAIYLTEYRGLTVPQISELREKLGRDTSYTVAKNTLVRIAAKEAGIEGLDELLAGPTAVTFVKGDFIEAAKTLRDFAKTNKALIIKGGFADGTVYDAEGAKKLADLKSRPQLLAEFAGDIKATMSKAAYLFNALPTKAVRTIDALREKQEKAA.

It belongs to the universal ribosomal protein uL10 family. As to quaternary structure, part of the ribosomal stalk of the 50S ribosomal subunit. The N-terminus interacts with L11 and the large rRNA to form the base of the stalk. The C-terminus forms an elongated spine to which L12 dimers bind in a sequential fashion forming a multimeric L10(L12)X complex.

Functionally, forms part of the ribosomal stalk, playing a central role in the interaction of the ribosome with GTP-bound translation factors. The polypeptide is Large ribosomal subunit protein uL10 (Bifidobacterium adolescentis (strain ATCC 15703 / DSM 20083 / NCTC 11814 / E194a)).